Here is a 570-residue protein sequence, read N- to C-terminus: Serine/threonine-protein kinase flr-4 (570 aa).

The 292-residue stretch at 40–331 (YKYIQDLGKG…KLRIQIKKIL (292 aa)) folds into the Protein kinase domain. ATP-binding positions include 46–54 (LGKGRFGTV) and Lys67. Asp172 (proton acceptor) is an active-site residue. Residues 338–369 (EEETDISHPISNSNTDSSTAISHNHSNDRKVG) are disordered. Positions 346 to 361 (PISNSNTDSSTAISHN) are enriched in polar residues. The next 3 helical transmembrane spans lie at 400-420 (IMQIFVASGYYLSRILYFLNI), 425-445 (ICYLLLFLSLGITALGSFLLI), and 471-491 (LIISGILIVLMFALLFSCCMV). Positions 550–570 (VRRNHDDYYYDESSGPANEEN) are disordered.

Belongs to the protein kinase superfamily. Ser/Thr protein kinase family. In terms of tissue distribution, present in the intestinal cells from comma-stage embryos through the adult stage, although the intestinal expression is weaker after the L1 stage. Accumulates at the cell membrane of intestinal cells, especially the lateral membrane intervening the intestinal cells. Also detected in the muscles of the pharyngeal isthmus from the 3-fold embryonic stage, and in a pair of head neurons, which correspond to the AUA neurons, from the late L1 stage (at protein level).

It is found in the membrane. It catalyses the reaction L-seryl-[protein] + ATP = O-phospho-L-seryl-[protein] + ADP + H(+). It carries out the reaction L-threonyl-[protein] + ATP = O-phospho-L-threonyl-[protein] + ADP + H(+). Functionally, probable serine-threonine protein kinase involved in the control of defecation rhythms. Required to increase the length of defecation cycle period. Acts in a cell-functional rather than developmental aspect in the regulation of defecation rhythms. Prevents preferential activation of the p38 MAPK pathway in response to the levels of vitamin B12 in different food types during larval development, thereby regulating the expression of cytoprotective genes, modulating life span and stress tolerance. In Caenorhabditis elegans, this protein is Serine/threonine-protein kinase flr-4 (flr-4).